The primary structure comprises 332 residues: MGSSGSMVKPISGFLAALIQYPVPVVESRADIDKQIKQIIKTIHSTKAGYPGLELIVFPEYSTQGLNTKKWTTEEFLCTVPGPETDLFAEACKESEVYGVFSLMERNPDGGEPYNTAIIIDPQGEMILKYRKLNPWVPVEPWKAGDLGLPVCDGPGGSKLAVCICHDGMFPEVAREAAYKGANVLIRISGYSTQVSEQWMLTNRSNAWQNLMYTLSVNLAGYDGVFYYFGEGQVCNFDGTTLVQGHRNPWEIVTAEVYPELADQARLGWGLENNIYNLGSRGYVATPGGVKENPYTFVKDLAEGKYKVPWEDEIKVKDGTIYGYPVKKTIHS.

The region spanning 14 to 259 (FLAALIQYPV…WEIVTAEVYP (246 aa)) is the CN hydrolase domain. Catalysis depends on E60, which acts as the Proton acceptor. The active-site Proton donor is K132. The active-site Nucleophile is C165.

This sequence belongs to the carbon-nitrogen hydrolase superfamily. Aliphatic amidase family.

It carries out the reaction formamide + H2O = formate + NH4(+). Functionally, is an aliphatic amidase with a restricted substrate specificity, as it only hydrolyzes formamide. This chain is Formamidase, found in Bacillus cereus (strain Q1).